Reading from the N-terminus, the 45-residue chain is Cytochrome b559 subunit beta (45 aa).

The chain crosses the membrane as a helical span at residues W20–A36. H24 is a heme binding site.

The protein belongs to the PsbE/PsbF family. Heterodimer of an alpha subunit and a beta subunit. PSII is composed of 1 copy each of membrane proteins PsbA, PsbB, PsbC, PsbD, PsbE, PsbF, PsbH, PsbI, PsbJ, PsbK, PsbL, PsbM, PsbT, PsbX, PsbY, PsbZ, Psb30/Ycf12, peripheral proteins PsbO, CyanoQ (PsbQ), PsbU, PsbV and a large number of cofactors. It forms dimeric complexes. Heme b serves as cofactor.

It is found in the cellular thylakoid membrane. Functionally, this b-type cytochrome is tightly associated with the reaction center of photosystem II (PSII). PSII is a light-driven water:plastoquinone oxidoreductase that uses light energy to abstract electrons from H(2)O, generating O(2) and a proton gradient subsequently used for ATP formation. It consists of a core antenna complex that captures photons, and an electron transfer chain that converts photonic excitation into a charge separation. This is Cytochrome b559 subunit beta from Parasynechococcus marenigrum (strain WH8102).